The following is a 310-amino-acid chain: Pantothenate kinase (310 aa).

95-102 (GSVAVGKS) serves as a coordination point for ATP.

Belongs to the prokaryotic pantothenate kinase family.

It localises to the cytoplasm. The catalysed reaction is (R)-pantothenate + ATP = (R)-4'-phosphopantothenate + ADP + H(+). It participates in cofactor biosynthesis; coenzyme A biosynthesis; CoA from (R)-pantothenate: step 1/5. The protein is Pantothenate kinase of Rhodococcus jostii (strain RHA1).